A 132-amino-acid chain; its full sequence is Agouti-signaling protein (132 aa).

The first 22 residues, M1–S22, serve as a signal peptide directing secretion. N-linked (GlcNAc...) asparagine glycosylation is present at N39. The disordered stretch occupies residues I62–C93. The span at R64–K79 shows a compositional bias: basic and acidic residues. Intrachain disulfides connect C93-C108, C100-C114, C107-C125, C111-C132, and C116-C123. The Agouti domain occupies C93 to C132.

The protein localises to the secreted. Functionally, involved in the regulation of melanogenesis. The binding of ASP to MC1R precludes alpha-MSH initiated signaling and thus blocks production of cAMP, leading to a down-regulation of eumelanogenesis (brown/black pigment) and thus increasing synthesis of pheomelanin (yellow/red pigment). This chain is Agouti-signaling protein (ASIP), found in Leontopithecus chrysomelas (Golden-headed lion tamarin).